The following is a 275-amino-acid chain: Transmembrane protein 202 (275 aa).

4 helical membrane passes run 60-80 (SGFS…QFLV), 116-136 (ALFL…LSSC), 151-171 (VSML…LFLA), and 193-213 (WCSE…FITF).

The protein resides in the membrane. This chain is Transmembrane protein 202 (Tmem202), found in Mus musculus (Mouse).